Reading from the N-terminus, the 182-residue chain is Ribosome-recycling factor (182 aa).

Belongs to the RRF family.

The protein resides in the cytoplasm. Responsible for the release of ribosomes from messenger RNA at the termination of protein biosynthesis. May increase the efficiency of translation by recycling ribosomes from one round of translation to another. The protein is Ribosome-recycling factor of Synechocystis sp. (strain ATCC 27184 / PCC 6803 / Kazusa).